The following is a 132-amino-acid chain: Glycine cleavage system H protein (132 aa).

The 83-residue stretch at 24-106 folds into the Lipoyl-binding domain; sequence IATIGLSAFA…YGDGWLIKVR (83 aa). Lys-65 bears the N6-lipoyllysine mark.

It belongs to the GcvH family. In terms of assembly, the glycine cleavage system is composed of four proteins: P, T, L and H. The cofactor is (R)-lipoate.

Its function is as follows. The glycine cleavage system catalyzes the degradation of glycine. The H protein shuttles the methylamine group of glycine from the P protein to the T protein. The chain is Glycine cleavage system H protein from Rippkaea orientalis (strain PCC 8801 / RF-1) (Cyanothece sp. (strain PCC 8801)).